A 90-amino-acid polypeptide reads, in one-letter code: Barrier-to-autointegration factor A (90 aa).

Belongs to the BAF family. In terms of assembly, homodimer. Interacts with nemp1a and nemp1b. Post-translationally, phosphorylated during S and M phases.

The protein resides in the nucleus. It localises to the chromosome. The protein localises to the nucleus envelope. Its subcellular location is the cytoplasm. Non-specific DNA-binding protein that plays key roles in mitotic nuclear reassembly, chromatin organization, DNA damage response, gene expression and intrinsic immunity against foreign DNA. Contains two non-specific double-stranded DNA (dsDNA)-binding sites which promote DNA cross-bridging. Plays a key role in nuclear membrane reformation at the end of mitosis by driving formation of a single nucleus in a spindle-independent manner. Transiently cross-bridges anaphase chromosomes via its ability to bridge distant DNA sites, leading to the formation of a dense chromatin network at the chromosome ensemble surface that limits membranes to the surface. Also acts as a negative regulator of innate immune activation by restricting CGAS activity toward self-DNA upon acute loss of nuclear membrane integrity. Outcompetes CGAS for DNA-binding, thereby preventing CGAS activation and subsequent damaging autoinflammatory responses. Also involved in DNA damage response; acts by inhibiting the ADP-ribosyltransferase activity of PARP1. Involved in the recognition of exogenous dsDNA in the cytosol: associates with exogenous dsDNA immediately after its appearance in the cytosol at endosome breakdown and is required to avoid autophagy. In Xenopus laevis (African clawed frog), this protein is Barrier-to-autointegration factor A (banf1-a).